Here is a 213-residue protein sequence, read N- to C-terminus: Negative modulator of initiation of replication (213 aa).

Interaction with DNA stretches follow at residues Ala116–Val117, Arg145–Tyr149, and Asn179–Lys185.

It belongs to the SeqA family. In terms of assembly, homodimer. Polymerizes to form helical filaments.

It localises to the cytoplasm. Negative regulator of replication initiation, which contributes to regulation of DNA replication and ensures that replication initiation occurs exactly once per chromosome per cell cycle. Binds to pairs of hemimethylated GATC sequences in the oriC region, thus preventing assembly of replication proteins and re-initiation at newly replicated origins. Repression is relieved when the region becomes fully methylated. In Haemophilus parainfluenzae (strain T3T1), this protein is Negative modulator of initiation of replication.